A 467-amino-acid chain; its full sequence is MSERTLFDKVWDAHTVRVLPSGQTQLFIGLHLIHEVTSPQAFAMLRERNLPVLFPERTVATVDHIIPTDNRTRPFADPLAEEMIQELERNCRQYRIRFYNSGSGQQGIVHVIAPEQGLTQPGMTIACGDSHTSTHGAFGAIAFGIGTSQVRDVLATQTLALSKLKVRRIEVHGRLGPGVYAKDVILHIIRKLGVKGGVGYAYEYGGSTIEAMSMEERMTLCNMSIEGGARCGYVNPDAVTFEYLKGREFAPQGSDWEEAVAWWQSLASGPDAVYDDVVVFQAAEIAPTVTWGITPGQSIGVDERIPAPEELPESERELAKEAYAYMGLRPGDPIVGTPVDVCFIGSCTNGRLSDLREAAKIAKGQRVAPGVKAFVVPGSERVKQEAEREGLREIFEAAGFEWRDPGCSMCLAMNPDRLVGRQISASSSNRNFKGRQGSPSGRTLLMSPAMVAAAAVSGKVVDVRELL.

[4Fe-4S] cluster is bound by residues Cys-347, Cys-407, and Cys-410.

This sequence belongs to the aconitase/IPM isomerase family. LeuC type 1 subfamily. Heterodimer of LeuC and LeuD. The cofactor is [4Fe-4S] cluster.

It carries out the reaction (2R,3S)-3-isopropylmalate = (2S)-2-isopropylmalate. The protein operates within amino-acid biosynthesis; L-leucine biosynthesis; L-leucine from 3-methyl-2-oxobutanoate: step 2/4. In terms of biological role, catalyzes the isomerization between 2-isopropylmalate and 3-isopropylmalate, via the formation of 2-isopropylmaleate. This is 3-isopropylmalate dehydratase large subunit from Synechococcus sp. (strain JA-3-3Ab) (Cyanobacteria bacterium Yellowstone A-Prime).